We begin with the raw amino-acid sequence, 452 residues long: Probable phosphoglucosamine mutase (452 aa).

Serine 101 serves as the catalytic Phosphoserine intermediate. Residues serine 101, aspartate 242, aspartate 244, and aspartate 246 each coordinate Mg(2+). A Phosphoserine modification is found at serine 101.

This sequence belongs to the phosphohexose mutase family. Mg(2+) serves as cofactor. Activated by phosphorylation.

The catalysed reaction is alpha-D-glucosamine 1-phosphate = D-glucosamine 6-phosphate. In terms of biological role, catalyzes the conversion of glucosamine-6-phosphate to glucosamine-1-phosphate. The sequence is that of Probable phosphoglucosamine mutase from Methanosphaera stadtmanae (strain ATCC 43021 / DSM 3091 / JCM 11832 / MCB-3).